The primary structure comprises 254 residues: Glycerol operon regulatory protein (254 aa).

One can recognise an HTH iclR-type domain in the interval 5–67; that stretch reads IQSLERAAAM…DASGRYQLGA (63 aa). The segment at residues 27–46 is a DNA-binding region (H-T-H motif); it reads LSDIASSLGLAKGTAHGILR. An IclR-ED domain is found at 82–251; sequence LRARALVWTD…ARAVSRDLGA (170 aa).

May be an activator protein for the gylABX operon. The chain is Glycerol operon regulatory protein (gylR) from Streptomyces coelicolor (strain ATCC BAA-471 / A3(2) / M145).